The primary structure comprises 172 residues: Disulfide bond formation protein B (172 aa).

Residues 1-11 (MNPFRWGFRAQ) are Cytoplasmic-facing. A helical membrane pass occupies residues 12 to 28 (FLLGFLACAGLLAYAIY). Topologically, residues 29 to 46 (VQLHLGLEPCPLCIFQRI) are periplasmic. A disulfide bridge connects residues C38 and C41. The helical transmembrane segment at 47-63 (AFATLALLFLLGALHGP) threads the bilayer. Residues 64–70 (RGAGGRK) are Cytoplasmic-facing. The helical transmembrane segment at 71-88 (AYGVLAFIAAGVGMGIAA) threads the bilayer. The Periplasmic segment spans residues 89 to 145 (RHVWVQIRPKDMMSSCGPPLSFLSETMGPFEVFRTVLTGTGDCGNIDWRFLGLSMPM). The cysteines at positions 104 and 131 are disulfide-linked. A helical membrane pass occupies residues 146–164 (WSMVWFVGLALWALYAGFK). At 165–172 (HRGPRKLF) the chain is on the cytoplasmic side.

Belongs to the DsbB family.

It localises to the cell inner membrane. Required for disulfide bond formation in some periplasmic proteins. Acts by oxidizing the DsbA protein. The chain is Disulfide bond formation protein B from Xanthomonas campestris pv. campestris (strain 8004).